Reading from the N-terminus, the 2197-residue chain is Protein sickie (2197 aa).

Positions R21–Q129 constitute a Calponin-homology (CH) domain. Disordered regions lie at residues G165–Q197, C235–H311, A331–H646, G730–K767, R788–V910, G1094–N1119, and T1202–G1223. Low complexity predominate over residues Q175–Q197. Residues S261–R290 show a composition bias toward polar residues. The span at P291–P304 shows a compositional bias: low complexity. Residues A331 to Q341 are compositionally biased toward polar residues. 2 stretches are compositionally biased toward low complexity: residues S342–A354 and S379–Q398. Over residues Q399–N428 the composition is skewed to basic and acidic residues. Composition is skewed to polar residues over residues E429–S441, A561–S570, E577–Y588, and S633–K644. Low complexity-rich tracts occupy residues G755–G766, S796–N831, and S887–P904. Residues G1100–N1119 show a composition bias toward polar residues. Residues Y1262 to Q1342 adopt a coiled-coil conformation. Disordered regions lie at residues Q1373–S1415 and K1455–K1511. Polar residues-rich tracts occupy residues G1379–S1399 and R1406–S1415. Residues K1455–H1468 are compositionally biased toward basic residues. Residues S1556–T1591 adopt a coiled-coil conformation. Disordered stretches follow at residues S1600–E1633, C1648–P1690, and S2172–E2197. The span at Q1603–E1616 shows a compositional bias: polar residues. Residues P1650 to P1663 show a composition bias toward pro residues. A compositionally biased stretch (polar residues) spans L2184–E2197.

It belongs to the Nav/unc-53 family.

Functionally, required for the immune deficiency pathway, which mediates responses to Gram-negative bacterial infection. Favors Rel activation and nuclear translocation. This chain is Protein sickie (sick), found in Drosophila melanogaster (Fruit fly).